The chain runs to 264 residues: 3-methyl-2-oxobutanoate hydroxymethyltransferase (264 aa).

The Mg(2+) site is built by D45 and D84. 3-methyl-2-oxobutanoate is bound by residues 45–46, D84, and K112; that span reads DS. Mg(2+) is bound at residue E114. E181 acts as the Proton acceptor in catalysis.

This sequence belongs to the PanB family. Homodecamer; pentamer of dimers. It depends on Mg(2+) as a cofactor.

It localises to the cytoplasm. The enzyme catalyses 3-methyl-2-oxobutanoate + (6R)-5,10-methylene-5,6,7,8-tetrahydrofolate + H2O = 2-dehydropantoate + (6S)-5,6,7,8-tetrahydrofolate. Its pathway is cofactor biosynthesis; (R)-pantothenate biosynthesis; (R)-pantoate from 3-methyl-2-oxobutanoate: step 1/2. Functionally, catalyzes the reversible reaction in which hydroxymethyl group from 5,10-methylenetetrahydrofolate is transferred onto alpha-ketoisovalerate to form ketopantoate. The sequence is that of 3-methyl-2-oxobutanoate hydroxymethyltransferase from Aeromonas salmonicida (strain A449).